Here is a 526-residue protein sequence, read N- to C-terminus: Inosine-5'-monophosphate dehydrogenase (526 aa).

CBS domains lie at 120-179 (FIQD…EDPV) and 183-239 (MATD…PLAS). Residues 276–278 (DSS) and 326–328 (GMG) contribute to the NAD(+) site. K(+) contacts are provided by Gly328 and Gly330. Residue Ser331 participates in IMP binding. Cys333 is a K(+) binding site. Cys333 (thioimidate intermediate) is an active-site residue. IMP-binding positions include 366-368 (DGG) and 389-390 (GS). Arg439 functions as the Proton acceptor in the catalytic mechanism. Gln451 is an IMP binding site. Residue Ser506 coordinates K(+). The segment at 506–526 (SAQTEGNVHGLHTHEKKLYSS) is disordered. A compositionally biased stretch (basic and acidic residues) spans 517-526 (HTHEKKLYSS).

Belongs to the IMPDH/GMPR family. Homotetramer. It depends on K(+) as a cofactor.

It is found in the cytoplasm. The enzyme catalyses IMP + NAD(+) + H2O = XMP + NADH + H(+). Its pathway is secondary metabolite biosynthesis; terpenoid biosynthesis. Its activity is regulated as follows. Mycophenolic acid (MPA) is a non-competitive inhibitor that prevents formation of the closed enzyme conformation by binding to the same site as the amobile flap. In contrast, mizoribine monophosphate (MZP) is a competitive inhibitor that induces the closed conformation. MPA is a potent inhibitor of mammalian IMPDHs but a poor inhibitor of the bacterial enzymes. MZP is a more potent inhibitor of bacterial IMPDH. In terms of biological role, catalyzes the conversion of inosine 5'-phosphate (IMP) to xanthosine 5'-phosphate (XMP), the first committed and rate-limiting step in the de novo synthesis of guanine nucleotides, and therefore plays an important role in the regulation of cell growth. Part of the gene cluster that mediates the biosynthesis of mycophenolic acid (MPA), the first isolated antibiotic natural product in the world. Does not play a role in the biosynthesis of MPA, but is involved in self resistance to MPA, since MPA acts as an inhibitor of IMP dehydrogenases. The chain is Inosine-5'-monophosphate dehydrogenase from Penicillium roqueforti (strain FM164).